The sequence spans 949 residues: Nonsense-mediated mRNA decay factor SMG8 (949 aa).

Disordered stretches follow at residues Ser564–Thr607, Asn624–Asn652, and Pro748–Trp768. Positions Glu571–Val581 are enriched in acidic residues. Over residues Asn594–Thr607 the composition is skewed to polar residues. The span at Asn624–Ala648 shows a compositional bias: low complexity. The segment covering Lys749–Trp768 has biased composition (basic residues).

This sequence belongs to the SMG8 family.

Its function is as follows. Involved in nonsense-mediated decay (NMD) of mRNAs containing premature stop codons. Probable component of kinase complex containing nonC and recruited to stalled ribosomes. This is Nonsense-mediated mRNA decay factor SMG8 from Drosophila erecta (Fruit fly).